The primary structure comprises 104 residues: MSRRKRPNWINTIALERMQILFEQAEKEFSKHPERSDRYVKLTRNISTKYNIPLPNYWRGRFCKNCNKFLKPGSNLRVRLSNNTISRKCLECGDLKKVPYTKKN.

Residues cysteine 63, cysteine 66, cysteine 89, and cysteine 92 each contribute to the Zn(2+) site.

Belongs to the eukaryotic/archaeal RNase P protein component 4 family. As to quaternary structure, consists of a catalytic RNA component and at least 4-5 protein subunits. Requires Zn(2+) as cofactor.

The protein resides in the cytoplasm. It carries out the reaction Endonucleolytic cleavage of RNA, removing 5'-extranucleotides from tRNA precursor.. Part of ribonuclease P, a protein complex that generates mature tRNA molecules by cleaving their 5'-ends. This is Ribonuclease P protein component 4 from Methanosphaera stadtmanae (strain ATCC 43021 / DSM 3091 / JCM 11832 / MCB-3).